Here is a 179-residue protein sequence, read N- to C-terminus: MRRRTNIAKQDNRKPMMNGAIRAREVRLIGAEGEQLGVTPTSEALMQAENLNMDLVLISNQEPPVAKIMDYTKFMFEQKKKQKEAKKKQAVVSVKEVRLSPVIDQNDFDTKLRQAIKFLEKGDKVKVSIRFKGRMITHQDVGRQVMDKFAQATKEVAVVEQRAKMDGRQMFLQLAPIKK.

Belongs to the IF-3 family. Monomer.

The protein resides in the cytoplasm. In terms of biological role, IF-3 binds to the 30S ribosomal subunit and shifts the equilibrium between 70S ribosomes and their 50S and 30S subunits in favor of the free subunits, thus enhancing the availability of 30S subunits on which protein synthesis initiation begins. The sequence is that of Translation initiation factor IF-3 from Lactococcus lactis subsp. lactis (strain IL1403) (Streptococcus lactis).